Reading from the N-terminus, the 300-residue chain is Haloalkane dehalogenase (300 aa).

An AB hydrolase-1 domain is found at 32–155 (AIVFQHGNPT…PAVRGVFQGF (124 aa)). Asp109 acts as the Nucleophile in catalysis. Residue Glu133 is the Proton donor of the active site. His273 serves as the catalytic Proton acceptor.

This sequence belongs to the haloalkane dehalogenase family. Type 2 subfamily. In terms of assembly, monomer.

It carries out the reaction 1-haloalkane + H2O = a halide anion + a primary alcohol + H(+). Catalyzes hydrolytic cleavage of carbon-halogen bonds in halogenated aliphatic compounds, leading to the formation of the corresponding primary alcohols, halide ions and protons. The polypeptide is Haloalkane dehalogenase (Mycobacterium tuberculosis (strain ATCC 25177 / H37Ra)).